The primary structure comprises 187 residues: uncharacterized protein (187 aa).

The signal sequence occupies residues 1–28; it reads MRLHRTNNSRRCTILLILALKIFDFVDT. Residues asparagine 58, asparagine 70, asparagine 156, and asparagine 168 are each glycosylated (N-linked (GlcNAc...) asparagine).

It is found in the secreted. This is an uncharacterized protein from Caenorhabditis elegans.